Here is a 365-residue protein sequence, read N- to C-terminus: Glycine oxidase (365 aa).

Residues 12-13 (VI), 32-33 (DQ), 40-41 (SS), 45-47 (GGI), and isoleucine 173 contribute to the FAD site. Arginine 302 lines the substrate pocket. 327 to 333 (HYRNGLV) serves as a coordination point for FAD.

The protein belongs to the DAO family. ThiO subfamily. As to quaternary structure, monomer. Requires FAD as cofactor.

It catalyses the reaction glycine + O2 + H2O = glyoxylate + H2O2 + NH4(+). The catalysed reaction is sarcosine + O2 + H2O = methylamine + glyoxylate + H2O2. It participates in cofactor biosynthesis; thiamine diphosphate biosynthesis. Functionally, catalyzes the oxidation of glycine, leading to glyoxyl imine and hydrogen peroxide as primary products; glyoxyl imine is used for the biosynthesis of the thiazole ring of thiamine. Otherwise, glyoxyl imine is spontaneously hydrolyzed in water to produce glyoxylate and ammonia. Can also use sarcosine (N-methylglycine) as substrate, and, to a lesser extent, N-ethylglycine and D-proline. Has no activity towards other amino-acids D-Asp, D-Glu, D-Gln, D-His, D-Leu, D-Lys, D-ornithine, D-Trp, D-Val, L-Ala, L-Asp, L-Glu, L-His, L-Leu, L-Lys, L-Met and L-Pro. This Pseudomonas putida (strain ATCC 47054 / DSM 6125 / CFBP 8728 / NCIMB 11950 / KT2440) protein is Glycine oxidase.